We begin with the raw amino-acid sequence, 412 residues long: Nucleoside transporter 1 (412 aa).

Residues 1-21 form a disordered region; sequence MSKIKESSSGILGASNNTNKE. At 1–29 the chain is on the cytoplasmic side; sequence MSKIKESSSGILGASNNTNKESSQKSARS. Positions 7–21 are enriched in polar residues; that stretch reads SSSGILGASNNTNKE. A helical membrane pass occupies residues 30 to 50; that stretch reads IALPMTYALIGVSCLNVWNSA. The Extracellular segment spans residues 51 to 56; that stretch reads LGLNIK. Residues 57–77 traverse the membrane as a helical segment; the sequence is ITYNIFQMAGLLTSSVLALFV. Residues 78–81 are Cytoplasmic-facing; sequence NYPR. The chain crosses the membrane as a helical span at residues 82 to 102; it reads VLLPTSLGVLTLLCAGFQIAH. Over 103–114 the chain is Extracellular; that stretch reads QTFSDSAFDTYC. Residues 115–135 traverse the membrane as a helical segment; that stretch reads LAAFITIGLMAGIAQTIAFAI. The Cytoplasmic portion of the chain corresponds to 136-144; it reads GTTKESNMS. Residues 145 to 165 form a helical membrane-spanning segment; sequence GYISAGIGMSGVLIFCINLIL. At 166-181 the chain is on the extracellular side; it reads DYIVSDEKIYEINKSK. A helical membrane pass occupies residues 182 to 202; the sequence is LLCLFSISEIFLIITIVCCVL. Residues 203–240 lie on the Cytoplasmic side of the membrane; it reads YIDLFPKNDNNKDSTDIEKAEEKEGRLPLIEIIKDGYK. A helical membrane pass occupies residues 241–261; sequence AILSIFLVNWLSLQLFPGIGH. Residues 262–271 lie on the Extracellular side of the membrane; sequence KKWQEKHGMT. The helical transmembrane segment at 272–294 threads the bilayer; sequence DNNVTIIVGMFQVFDFISRYPPN. The Cytoplasmic portion of the chain corresponds to 295-310; that stretch reads FTHIKIFKYFTFSLNT. The helical transmembrane segment at 311–331 threads the bilayer; sequence LLIGNFLRLLFIPWFVLNAVI. The Extracellular segment spans residues 332-343; it reads SSSFFTNIVQQC. The helical transmembrane segment at 344-364 threads the bilayer; the sequence is VCIAALAFTNGWFNTVPFIVF. Residues 365–382 are Cytoplasmic-facing; the sequence is VKELKKVKHQKDIETISR. The helical transmembrane segment at 383-403 threads the bilayer; sequence IMVVSLFFGLFFGMLTTCLYD. The Extracellular segment spans residues 404–412; that stretch reads YFPIGILNN.

The protein belongs to the SLC29A/ENT transporter (TC 2.A.57) family.

It localises to the cell membrane. It carries out the reaction inosine(in) = inosine(out). It catalyses the reaction adenosine(in) = adenosine(out). The enzyme catalyses hypoxanthine(out) = hypoxanthine(in). The catalysed reaction is guanosine(in) = guanosine(out). It carries out the reaction guanine(out) = guanine(in). It catalyses the reaction thymidine(in) = thymidine(out). The enzyme catalyses uridine(out) = uridine(in). The catalysed reaction is uracil(in) = uracil(out). It carries out the reaction thymine(out) = thymine(in). It catalyses the reaction adenine(out) = adenine(in). The enzyme catalyses cytosine(out) = cytosine(in). The catalysed reaction is xanthine(out) = xanthine(in). Functionally, nucleoside and nucleobase transporter with a broad substrate specificity. This Plasmodium berghei (strain Anka) protein is Nucleoside transporter 1.